A 214-amino-acid chain; its full sequence is A-type ATP synthase subunit D (214 aa).

It belongs to the V-ATPase D subunit family. Has multiple subunits with at least A(3), B(3), C, D, E, F, H, I and proteolipid K(x).

The protein resides in the cell membrane. Its function is as follows. Component of the A-type ATP synthase that produces ATP from ADP in the presence of a proton gradient across the membrane. The chain is A-type ATP synthase subunit D from Thermococcus sibiricus (strain DSM 12597 / MM 739).